The following is a 30-amino-acid chain: V-type proton ATPase catalytic subunit A isoform 2 (30 aa).

Belongs to the ATPase alpha/beta chains family. V-ATPase is a heteromultimeric enzyme composed of a peripheral catalytic V1 complex (main components: subunits A, B, C, D, E, and F) attached to an integral membrane V0 proton pore complex (main component: the proteolipid protein).

It catalyses the reaction ATP + H2O + 4 H(+)(in) = ADP + phosphate + 5 H(+)(out). In terms of biological role, catalytic subunit of the peripheral V1 complex of vacuolar ATPase. V-ATPase vacuolar ATPase is responsible for acidifying a variety of intracellular compartments in eukaryotic cells. In Equisetum arvense (Field horsetail), this protein is V-type proton ATPase catalytic subunit A isoform 2.